The chain runs to 181 residues: Shikimate kinase (181 aa).

ATP is bound at residue 17 to 22; that stretch reads GAGKTT. Thr-21 provides a ligand contact to Mg(2+). Substrate is bound by residues Asp-39, Arg-63, and Gly-85. Residue Arg-122 participates in ATP binding. Arg-141 contributes to the substrate binding site.

It belongs to the shikimate kinase family. Monomer. Requires Mg(2+) as cofactor.

Its subcellular location is the cytoplasm. The catalysed reaction is shikimate + ATP = 3-phosphoshikimate + ADP + H(+). Its pathway is metabolic intermediate biosynthesis; chorismate biosynthesis; chorismate from D-erythrose 4-phosphate and phosphoenolpyruvate: step 5/7. In terms of biological role, catalyzes the specific phosphorylation of the 3-hydroxyl group of shikimic acid using ATP as a cosubstrate. The sequence is that of Shikimate kinase from Trichormus variabilis (strain ATCC 29413 / PCC 7937) (Anabaena variabilis).